Here is a 249-residue protein sequence, read N- to C-terminus: Orotidine 5'-phosphate decarboxylase (249 aa).

Substrate-binding positions include Asp-21, Lys-43, 72–81 (DLKLYDIPET), Thr-128, Arg-193, Gln-204, Gly-224, and Arg-225. Lys-74 (proton donor) is an active-site residue.

This sequence belongs to the OMP decarboxylase family. Type 1 subfamily. As to quaternary structure, homodimer.

The enzyme catalyses orotidine 5'-phosphate + H(+) = UMP + CO2. Its pathway is pyrimidine metabolism; UMP biosynthesis via de novo pathway; UMP from orotate: step 2/2. Catalyzes the decarboxylation of orotidine 5'-monophosphate (OMP) to uridine 5'-monophosphate (UMP). In Desulfosudis oleivorans (strain DSM 6200 / JCM 39069 / Hxd3) (Desulfococcus oleovorans), this protein is Orotidine 5'-phosphate decarboxylase.